Consider the following 351-residue polypeptide: N-acetyl-gamma-glutamyl-phosphate reductase (351 aa).

Cysteine 154 is an active-site residue.

The protein belongs to the NAGSA dehydrogenase family. Type 1 subfamily.

Its subcellular location is the cytoplasm. The enzyme catalyses N-acetyl-L-glutamate 5-semialdehyde + phosphate + NADP(+) = N-acetyl-L-glutamyl 5-phosphate + NADPH + H(+). It functions in the pathway amino-acid biosynthesis; L-arginine biosynthesis; N(2)-acetyl-L-ornithine from L-glutamate: step 3/4. In terms of biological role, catalyzes the NADPH-dependent reduction of N-acetyl-5-glutamyl phosphate to yield N-acetyl-L-glutamate 5-semialdehyde. This is N-acetyl-gamma-glutamyl-phosphate reductase from Prochlorococcus marinus (strain MIT 9215).